Here is an 86-residue protein sequence, read N- to C-terminus: Large ribosomal subunit protein eL43 (86 aa).

4 residues coordinate Zn(2+): Cys40, Cys43, Cys58, and Cys61. The C4-type zinc-finger motif lies at 40–61; the sequence is CPFCRSKAVIREAYGIYRCKKC.

This sequence belongs to the eukaryotic ribosomal protein eL43 family. Putative zinc-binding subfamily. Part of the 50S ribosomal subunit. Zn(2+) is required as a cofactor.

Its function is as follows. Binds to the 23S rRNA. This chain is Large ribosomal subunit protein eL43, found in Nanoarchaeum equitans (strain Kin4-M).